Reading from the N-terminus, the 83-residue chain is RNA-binding protein Hfq (83 aa).

Positions 11 to 71 (DVFLNYIRKN…ISTIMPASPV (61 aa)) constitute a Sm domain.

It belongs to the Hfq family. In terms of assembly, homohexamer.

Functionally, RNA chaperone that binds small regulatory RNA (sRNAs) and mRNAs to facilitate mRNA translational regulation in response to envelope stress, environmental stress and changes in metabolite concentrations. Also binds with high specificity to tRNAs. The chain is RNA-binding protein Hfq from Rhodospirillum rubrum (strain ATCC 11170 / ATH 1.1.1 / DSM 467 / LMG 4362 / NCIMB 8255 / S1).